The chain runs to 165 residues: MARIRLGKVVRAVGLKGHLGVAGSEGALATVRRIALRREGEPEPPLQEVLEARPQGRLWAVRIEGVSDRTSAEAWVGAEVLALREDLPEAGEARHYWADLEGLPVVTVAGAAIGTVTGLYETGGVDVLVVTTEEGGEKLVPLAPYVEVDVAGRRVVVDPPEGLLD.

Positions 92–163 (EARHYWADLE…RVVVDPPEGL (72 aa)) constitute a PRC barrel domain.

It belongs to the RimM family. Binds ribosomal protein uS19.

Its subcellular location is the cytoplasm. Functionally, an accessory protein needed during the final step in the assembly of 30S ribosomal subunit, possibly for assembly of the head region. Essential for efficient processing of 16S rRNA. May be needed both before and after RbfA during the maturation of 16S rRNA. It has affinity for free ribosomal 30S subunits but not for 70S ribosomes. This chain is Ribosome maturation factor RimM, found in Anaeromyxobacter sp. (strain Fw109-5).